A 223-amino-acid polypeptide reads, in one-letter code: Dephospho-CoA kinase (223 aa).

The DPCK domain occupies 22–223; it reads LIGLSGPSCS…LLQEVKKRGF (202 aa). 30 to 35 contacts ATP; the sequence is CSGKNT.

It belongs to the CoaE family.

It is found in the cytoplasm. The catalysed reaction is 3'-dephospho-CoA + ATP = ADP + CoA + H(+). Its pathway is cofactor biosynthesis; coenzyme A biosynthesis; CoA from (R)-pantothenate: step 5/5. Its function is as follows. Catalyzes the phosphorylation of the 3'-hydroxyl group of dephosphocoenzyme A to form coenzyme A. This Treponema denticola (strain ATCC 35405 / DSM 14222 / CIP 103919 / JCM 8153 / KCTC 15104) protein is Dephospho-CoA kinase.